We begin with the raw amino-acid sequence, 113 residues long: Beta-microseminoprotein A1 (113 aa).

Positions Met1 to Gly20 are cleaved as a signal peptide. Cystine bridges form between Cys22-Cys70, Cys38-Cys62, Cys57-Cys93, Cys60-Cys69, and Cys84-Cys107.

It belongs to the beta-microseminoprotein family.

The protein resides in the secreted. The chain is Beta-microseminoprotein A1 (MSPA) from Saguinus oedipus (Cotton-top tamarin).